The chain runs to 1448 residues: Glutamate receptor ionotropic, NMDA 2B (1448 aa).

Positions 1–24 are cleaved as a signal peptide; the sequence is MRPTEACCYLKISLIILFYMGCYA. Residues 25–554 are Extracellular-facing; the sequence is QKHPNMDIAV…SAFLEPFSAD (530 aa). A disulfide bond links C81 and C316. H122 and E279 together coordinate Zn(2+). The N-linked (GlcNAc...) asparagine glycan is linked to N336. Disulfide bonds link C426-C453 and C433-C454. The L-glutamate site is built by T511 and R516. The helical transmembrane segment at 555–573 threads the bilayer; sequence VWVMMFVMLLIVSAVAVFV. Residues 574–600 lie on the Cytoplasmic side of the membrane; that stretch reads FEYFSPVGYNRCLADGREPGGPSFTIG. The discontinuously helical intramembrane region spans 601-620; sequence KAIWLLWGLVFNNSVPVQNP. The tract at residues 601 to 620 is pore-forming; that stretch reads KAIWLLWGLVFNNSVPVQNP. Residues 621–627 are Cytoplasmic-facing; that stretch reads KGTTSKI. Residues 628–643 form a helical membrane-spanning segment; sequence MVSVWAFFAVIFLASY. The Extracellular portion of the chain corresponds to 644-819; sequence TANLAAFMIQ…LDIDNMAGVF (176 aa). N685 is a glycosylation site (N-linked (GlcNAc...) asparagine). Residues 687 to 688 and D729 contribute to the L-glutamate site; that span reads ST. A disulfide bond links C743 and C798. Residues 820 to 839 form a helical membrane-spanning segment; that stretch reads YMLAAAMALSLITFIMEHLF. Topologically, residues 840–1448 are cytoplasmic; sequence FWQLRHCFMG…EKLSSIESDV (609 aa). A compositionally biased stretch (polar residues) spans 1254-1265; the sequence is APNSKYPQSPNG. The tract at residues 1254–1277 is disordered; it reads APNSKYPQSPNGKAQKRNRSKLHR. A compositionally biased stretch (basic residues) spans 1267 to 1277; it reads AQKRNRSKLHR.

Belongs to the glutamate-gated ion channel (TC 1.A.10.1) family. NR2B/GRIN2B subfamily. In terms of assembly, heterotetramer. Forms heterotetrameric channels composed of two GluN1/zeta subunits (GRIN1), and two identical GluN2/epsilon subunits (GRIN2A, GRIN2B, GRIN2C or GRIN2D) or GluN3 subunits (GRIN3A or GRIN3B) (in vitro). In vivo, the subunit composition may depend on the expression levels of the different subunits. As to expression, detected in oocytes.

It localises to the cell membrane. The protein resides in the postsynaptic cell membrane. The enzyme catalyses Ca(2+)(in) = Ca(2+)(out). It carries out the reaction Na(+)(in) = Na(+)(out). It catalyses the reaction K(+)(in) = K(+)(out). Functionally, component of N-methyl-D-aspartate (NMDA) receptors (NMDARs) that function as heterotetrameric, ligand-gated cation channels with high calcium permeability and voltage-dependent block by Mg(2+). Channel activation requires binding of the neurotransmitter L-glutamate to the GluN2 subunit, glycine binding to the GluN1 subunit, plus membrane depolarization to eliminate channel inhibition by Mg(2+). NMDARs mediate simultaneously the potasium efflux and the influx of calcium and sodium. Each GluN2 subunit confers differential attributes to channel properties, including activation, deactivation and desensitization kinetics, pH sensitivity, Ca2(+) permeability, and binding to allosteric modulators. This chain is Glutamate receptor ionotropic, NMDA 2B, found in Xenopus laevis (African clawed frog).